The primary structure comprises 353 residues: Photosystem II protein D1 (353 aa).

Residue T2 is modified to N-acetylthreonine. T2 bears the Phosphothreonine mark. 3 helical membrane-spanning segments follow: residues 29–46, 118–133, and 142–156; these read YIGW…TATS, HFLL…EWEL, and WIAV…AAAA. H118 provides a ligand contact to chlorophyll a. Pheophytin a is bound at residue Y126. Residues D170 and E189 each coordinate [CaMn4O5] cluster. A helical membrane pass occupies residues 197 to 218; it reads FHMLGVAGVFGGSLFSAMHGSL. H198 contributes to the chlorophyll a binding site. A quinone contacts are provided by residues H215 and 264–265; that span reads SF. Position 215 (H215) interacts with Fe cation. A Fe cation-binding site is contributed by H272. Residues 274–288 traverse the membrane as a helical segment; sequence FLAAWPVVGIWFTAL. Positions 332, 333, 342, and 344 each coordinate [CaMn4O5] cluster. Positions 345–353 are excised as a propeptide; the sequence is AVEAPSTNG.

It belongs to the reaction center PufL/M/PsbA/D family. In terms of assembly, PSII is composed of 1 copy each of membrane proteins PsbA, PsbB, PsbC, PsbD, PsbE, PsbF, PsbH, PsbI, PsbJ, PsbK, PsbL, PsbM, PsbT, PsbX, PsbY, PsbZ, Psb30/Ycf12, at least 3 peripheral proteins of the oxygen-evolving complex and a large number of cofactors. It forms dimeric complexes. The D1/D2 heterodimer binds P680, chlorophylls that are the primary electron donor of PSII, and subsequent electron acceptors. It shares a non-heme iron and each subunit binds pheophytin, quinone, additional chlorophylls, carotenoids and lipids. D1 provides most of the ligands for the Mn4-Ca-O5 cluster of the oxygen-evolving complex (OEC). There is also a Cl(-1) ion associated with D1 and D2, which is required for oxygen evolution. The PSII complex binds additional chlorophylls, carotenoids and specific lipids. is required as a cofactor. Post-translationally, tyr-161 forms a radical intermediate that is referred to as redox-active TyrZ, YZ or Y-Z. C-terminally processed by CTPA; processing is essential to allow assembly of the oxygen-evolving complex and thus photosynthetic growth.

The protein resides in the plastid. It localises to the chloroplast thylakoid membrane. The catalysed reaction is 2 a plastoquinone + 4 hnu + 2 H2O = 2 a plastoquinol + O2. Functionally, photosystem II (PSII) is a light-driven water:plastoquinone oxidoreductase that uses light energy to abstract electrons from H(2)O, generating O(2) and a proton gradient subsequently used for ATP formation. It consists of a core antenna complex that captures photons, and an electron transfer chain that converts photonic excitation into a charge separation. The D1/D2 (PsbA/PsbD) reaction center heterodimer binds P680, the primary electron donor of PSII as well as several subsequent electron acceptors. The sequence is that of Photosystem II protein D1 from Nandina domestica (Heavenly bamboo).